The chain runs to 590 residues: Aspartate--tRNA(Asp/Asn) ligase (590 aa).

E176 serves as a coordination point for L-aspartate. Positions 200–203 are aspartate; sequence QLFK. Residues R222 and H451 each contribute to the L-aspartate site. 222–224 serves as a coordination point for ATP; it reads RDE. ATP is bound at residue E485. Position 492 (R492) interacts with L-aspartate. 537 to 540 serves as a coordination point for ATP; the sequence is GIDR.

This sequence belongs to the class-II aminoacyl-tRNA synthetase family. Type 1 subfamily. Homodimer.

It is found in the cytoplasm. It carries out the reaction tRNA(Asx) + L-aspartate + ATP = L-aspartyl-tRNA(Asx) + AMP + diphosphate. Aspartyl-tRNA synthetase with relaxed tRNA specificity since it is able to aspartylate not only its cognate tRNA(Asp) but also tRNA(Asn). Reaction proceeds in two steps: L-aspartate is first activated by ATP to form Asp-AMP and then transferred to the acceptor end of tRNA(Asp/Asn). The polypeptide is Aspartate--tRNA(Asp/Asn) ligase (Ehrlichia canis (strain Jake)).